We begin with the raw amino-acid sequence, 144 residues long: Large ribosomal subunit protein uL16 (144 aa).

Positions 1-19 (MLLPKRVKYRRQHRPKTTG) are enriched in basic residues. A disordered region spans residues 1–23 (MLLPKRVKYRRQHRPKTTGRSKG).

Belongs to the universal ribosomal protein uL16 family. Part of the 50S ribosomal subunit.

In terms of biological role, binds 23S rRNA and is also seen to make contacts with the A and possibly P site tRNAs. The protein is Large ribosomal subunit protein uL16 of Staphylococcus saprophyticus subsp. saprophyticus (strain ATCC 15305 / DSM 20229 / NCIMB 8711 / NCTC 7292 / S-41).